We begin with the raw amino-acid sequence, 376 residues long: Erythronate-4-phosphate dehydrogenase (376 aa).

2 residues coordinate substrate: serine 45 and threonine 67. Residue aspartate 147 coordinates NAD(+). The active site involves arginine 209. NAD(+) is bound at residue aspartate 233. The active site involves glutamate 238. The active-site Proton donor is histidine 255. An NAD(+)-binding site is contributed by glycine 258. Tyrosine 259 is a binding site for substrate.

The protein belongs to the D-isomer specific 2-hydroxyacid dehydrogenase family. PdxB subfamily. In terms of assembly, homodimer.

The protein localises to the cytoplasm. It catalyses the reaction 4-phospho-D-erythronate + NAD(+) = (R)-3-hydroxy-2-oxo-4-phosphooxybutanoate + NADH + H(+). It participates in cofactor biosynthesis; pyridoxine 5'-phosphate biosynthesis; pyridoxine 5'-phosphate from D-erythrose 4-phosphate: step 2/5. Catalyzes the oxidation of erythronate-4-phosphate to 3-hydroxy-2-oxo-4-phosphonooxybutanoate. This Shewanella baltica (strain OS195) protein is Erythronate-4-phosphate dehydrogenase.